Consider the following 48-residue polypeptide: Small polypeptide DEVIL 19 (48 aa).

Residues 13-44 (AFTSKCVSLVKEQRARLYILRRCATMLCCWYI) form a required for DVL/RTFL small polypeptide activity region. The chain crosses the membrane as a helical span at residues 25-42 (QRARLYILRRCATMLCCW).

Belongs to the DVL/RTFL small polypeptides family.

The protein localises to the cell membrane. Small polypeptide acting as a regulatory molecule which coordinates cellular responses required for differentiation, growth and development, probably by restricting polar cell proliferation in lateral organs and coordinating socket cell recruitment and differentiation at trichome sites. The chain is Small polypeptide DEVIL 19 from Arabidopsis thaliana (Mouse-ear cress).